A 428-amino-acid polypeptide reads, in one-letter code: Beta-1,3-galactosyl-O-glycosyl-glycoprotein beta-1,6-N-acetylglucosaminyltransferase (428 aa).

The Cytoplasmic portion of the chain corresponds to 1 to 9; the sequence is MLRNLFRRR. Residues 5-9 are mediates interaction with GOLPH3 and is necessary and sufficient for localization to the Golgi; that stretch reads LFRRR. The chain crosses the membrane as a helical; Signal-anchor for type II membrane protein span at residues 10–32; sequence LFSCPTKYYFMLLVLSLITFSVL. Residues 33–121 form a stem region region; the sequence is RIHQKPEFFS…EPLTKEEVGF (89 aa). Residues 33-428 are Lumenal-facing; that stretch reads RIHQKPEFFS…RHKALENLEH (396 aa). N-linked (GlcNAc...) asparagine glycosylation is found at N58 and N95. Cystine bridges form between C59/C413, C100/C172, C151/C199, and C372/C381. The catalytic stretch occupies residues 122–428; it reads PIAYSIVVHH…RHKALENLEH (307 aa). Residues 128-130, 155-157, and Y187 contribute to the UDP-N-acetyl-alpha-D-glucosamine site; these read VVH and DRK. A glycoprotein-binding residues include E243, N250, K251, R254, E320, K341, and Y358. The active-site Nucleophile is E320. Residues R378 and K401 each contribute to the UDP-N-acetyl-alpha-D-glucosamine site.

It belongs to the glycosyltransferase 14 family. In terms of assembly, interacts with GOLPH3; may control GCNT1 retention in the Golgi. In terms of processing, N-glycosylated. Expressed in kidney, liver, stomach, spleen, lung and brain.

The protein resides in the golgi apparatus membrane. It carries out the reaction a 3-O-[beta-D-galactosyl-(1-&gt;3)-N-acetyl-alpha-D-galactosaminyl]-L-seryl-[protein] + UDP-N-acetyl-alpha-D-glucosamine = 3-O-{beta-D-galactosyl-(1-&gt;3)-[N-acetyl-beta-D-glucosaminyl-(1-&gt;6)]-N-acetyl-alpha-D-galactosaminyl}-L-seryl-[protein] + UDP + H(+). The enzyme catalyses a 3-O-[beta-D-galactosyl-(1-&gt;3)-N-acetyl-alpha-D-galactosaminyl]-L-threonyl-[protein] + UDP-N-acetyl-alpha-D-glucosamine = a 3-O-{beta-D-galactosyl-(1-&gt;3)-[N-acetyl-beta-D-glucosaminyl-(1-&gt;6)]-N-acetyl-alpha-D-galactosaminyl}-L-threonyl-[protein] + UDP + H(+). The catalysed reaction is a globoside GalGb4Cer + UDP-N-acetyl-alpha-D-glucosamine = a globoside GlcNAc-(beta1-&gt;6)-GalGb4Cer + UDP + H(+). It catalyses the reaction a ganglioside GA1 + UDP-N-acetyl-alpha-D-glucosamine = a ganglioside beta-D-GlcNAc-(1-&gt;6)-GA1 + UDP + H(+). Its pathway is protein modification; protein glycosylation. The protein operates within glycolipid biosynthesis. Inactivated by thiol-reactive agents. Inhibited by free UDP. Its function is as follows. Glycosyltransferase that catalyzes the transfer of an N-acetylglucosamine (GlcNAc) moiety in beta1-6 linkage from UDP-GlcNAc onto mucin-type core 1 O-glycan to form the branched mucin-type core 2 O-glycan. The catalysis is metal ion-independent and occurs with inversion of the anomeric configuration of sugar donor. Selectively involved in synthesis of mucin-type core 2 O-glycans that serve as scaffolds for the display of selectin ligand sialyl Lewis X epitope by myeloid cells, with an impact on homeostasis and recruitment to inflammatory sites. Can also act on glycolipid substrates. Transfers GlcNAc moiety to GalGb4Cer globosides in a reaction step to the synthesis of stage-specific embryonic antigen 1 (SSEA-1) determinant. Can use Galbeta1-3GalNAcalpha1-R and Galbeta1-3GalNAcbeta1-R oligosaccharide derivatives as acceptor substrates. The polypeptide is Beta-1,3-galactosyl-O-glycosyl-glycoprotein beta-1,6-N-acetylglucosaminyltransferase (Gcnt1) (Mus musculus (Mouse)).